The chain runs to 926 residues: Protein Niban 1 (926 aa).

A lipid anchor (N-myristoyl glycine) is attached at glycine 2. Serine 578, serine 581, serine 595, serine 601, and serine 640 each carry phosphoserine. Disordered regions lie at residues 604-699 (LPGA…VPGS) and 719-889 (VEND…EQVN). The span at 661-672 (VENTAGPLSSHL) shows a compositional bias: polar residues. At serine 699 the chain carries Phosphoserine. Residues 733 to 745 (NIKEEESKIHPEA) show a composition bias toward basic and acidic residues. At serine 755 the chain carries Phosphoserine. Positions 756 to 767 (CEEREVREKEAQ) are enriched in basic and acidic residues. The span at 784–797 (GRGSTSQSTSGGLT) shows a compositional bias: low complexity. A compositionally biased stretch (polar residues) spans 840-854 (VTVTPQEDATLSSNP). At serine 923 the chain carries Phosphoserine.

It belongs to the Niban family.

Its subcellular location is the cytoplasm. It is found in the membrane. Functionally, regulates phosphorylation of a number of proteins involved in translation regulation including EIF2A, EIF4EBP1 and RPS6KB1. May be involved in the endoplasmic reticulum stress response. This chain is Protein Niban 1, found in Mus musculus (Mouse).